A 616-amino-acid polypeptide reads, in one-letter code: Dihydroxy-acid dehydratase (616 aa).

D81 serves as a coordination point for Mg(2+). C122 provides a ligand contact to [2Fe-2S] cluster. Mg(2+) is bound by residues D123 and K124. At K124 the chain carries N6-carboxylysine. C197 lines the [2Fe-2S] cluster pocket. E493 serves as a coordination point for Mg(2+). S519 functions as the Proton acceptor in the catalytic mechanism.

The protein belongs to the IlvD/Edd family. As to quaternary structure, homodimer. The cofactor is [2Fe-2S] cluster. Requires Mg(2+) as cofactor.

It carries out the reaction (2R)-2,3-dihydroxy-3-methylbutanoate = 3-methyl-2-oxobutanoate + H2O. The catalysed reaction is (2R,3R)-2,3-dihydroxy-3-methylpentanoate = (S)-3-methyl-2-oxopentanoate + H2O. The protein operates within amino-acid biosynthesis; L-isoleucine biosynthesis; L-isoleucine from 2-oxobutanoate: step 3/4. It participates in amino-acid biosynthesis; L-valine biosynthesis; L-valine from pyruvate: step 3/4. Functions in the biosynthesis of branched-chain amino acids. Catalyzes the dehydration of (2R,3R)-2,3-dihydroxy-3-methylpentanoate (2,3-dihydroxy-3-methylvalerate) into 2-oxo-3-methylpentanoate (2-oxo-3-methylvalerate) and of (2R)-2,3-dihydroxy-3-methylbutanoate (2,3-dihydroxyisovalerate) into 2-oxo-3-methylbutanoate (2-oxoisovalerate), the penultimate precursor to L-isoleucine and L-valine, respectively. The chain is Dihydroxy-acid dehydratase from Corynebacterium kroppenstedtii (strain DSM 44385 / JCM 11950 / CIP 105744 / CCUG 35717).